A 396-amino-acid polypeptide reads, in one-letter code: Phosphoglycerate kinase (396 aa).

Residues 21–23 (DLN), Arg36, 59–62 (HLGR), Arg113, and Arg146 contribute to the substrate site. ATP is bound by residues Lys197, Glu319, and 345 to 348 (GGDT).

This sequence belongs to the phosphoglycerate kinase family. As to quaternary structure, monomer.

It localises to the cytoplasm. It carries out the reaction (2R)-3-phosphoglycerate + ATP = (2R)-3-phospho-glyceroyl phosphate + ADP. The protein operates within carbohydrate degradation; glycolysis; pyruvate from D-glyceraldehyde 3-phosphate: step 2/5. In Legionella pneumophila (strain Paris), this protein is Phosphoglycerate kinase.